A 377-amino-acid chain; its full sequence is Chaperone protein DnaJ (377 aa).

Residues 5–69 (EFYDRLGVSK…QKRSAYDQYG (65 aa)) form the J domain. A CR-type zinc finger spans residues 133–215 (GVEKDVSYHR…CHGTGHEKET (83 aa)). Residues Cys146, Cys149, Cys163, Cys166, Cys189, Cys192, Cys203, and Cys206 each coordinate Zn(2+). 4 CXXCXGXG motif repeats span residues 146 to 153 (CHTCAGSG), 163 to 170 (CGRCHGSG), 189 to 196 (CDVCHGSG), and 203 to 210 (CQTCHGTG).

This sequence belongs to the DnaJ family. Homodimer. It depends on Zn(2+) as a cofactor.

The protein resides in the cytoplasm. Its function is as follows. Participates actively in the response to hyperosmotic and heat shock by preventing the aggregation of stress-denatured proteins and by disaggregating proteins, also in an autonomous, DnaK-independent fashion. Unfolded proteins bind initially to DnaJ; upon interaction with the DnaJ-bound protein, DnaK hydrolyzes its bound ATP, resulting in the formation of a stable complex. GrpE releases ADP from DnaK; ATP binding to DnaK triggers the release of the substrate protein, thus completing the reaction cycle. Several rounds of ATP-dependent interactions between DnaJ, DnaK and GrpE are required for fully efficient folding. Also involved, together with DnaK and GrpE, in the DNA replication of plasmids through activation of initiation proteins. The protein is Chaperone protein DnaJ of Streptococcus uberis (strain ATCC BAA-854 / 0140J).